The primary structure comprises 108 residues: ATP-dependent Clp protease adapter protein ClpS (108 aa).

Belongs to the ClpS family. Binds to the N-terminal domain of the chaperone ClpA.

Functionally, involved in the modulation of the specificity of the ClpAP-mediated ATP-dependent protein degradation. The chain is ATP-dependent Clp protease adapter protein ClpS from Mycobacterium leprae (strain TN).